The chain runs to 251 residues: Triosephosphate isomerase (251 aa).

Position 8–10 (8–10 (NWK)) interacts with substrate. His-97 serves as the catalytic Electrophile. Glu-170 acts as the Proton acceptor in catalysis. Substrate-binding positions include Gly-176, Ser-215, and 236–237 (GG).

This sequence belongs to the triosephosphate isomerase family. In terms of assembly, homodimer.

It localises to the cytoplasm. It carries out the reaction D-glyceraldehyde 3-phosphate = dihydroxyacetone phosphate. It participates in carbohydrate biosynthesis; gluconeogenesis. It functions in the pathway carbohydrate degradation; glycolysis; D-glyceraldehyde 3-phosphate from glycerone phosphate: step 1/1. Functionally, involved in the gluconeogenesis. Catalyzes stereospecifically the conversion of dihydroxyacetone phosphate (DHAP) to D-glyceraldehyde-3-phosphate (G3P). This is Triosephosphate isomerase from Nitratidesulfovibrio vulgaris (strain DSM 19637 / Miyazaki F) (Desulfovibrio vulgaris).